The chain runs to 232 residues: MTKHGKRIRGILKNYDFSKSYSLREAIDILKQCPPVRFDQTVDVSIKLGIDPKKSDQQIRGAVFLPNGTGKTLRILVFASGNKVKEAVEAGADFMGSDDLVEKIKSGWLEFDVAVATPDMMREVGKLGKVLGPRNLMPTPKTGTVTTDVAKAISELRKGKIEFKADRAGVCNVGVGKLSFESSQIKENIEALSSALIKAKPPAAKGQYLVSFTISSTMGPGISIDTRELMAS.

It belongs to the universal ribosomal protein uL1 family. As to quaternary structure, part of the 50S ribosomal subunit.

Functionally, binds directly to 23S rRNA. The L1 stalk is quite mobile in the ribosome, and is involved in E site tRNA release. Its function is as follows. Protein L1 is also a translational repressor protein, it controls the translation of the L11 operon by binding to its mRNA. The polypeptide is Large ribosomal subunit protein uL1 (Chlamydia pneumoniae (Chlamydophila pneumoniae)).